The chain runs to 275 residues: NH(3)-dependent NAD(+) synthetase (275 aa).

An ATP-binding site is contributed by 46–53; the sequence is GISGGQDS. Asp-52 is a binding site for Mg(2+). A deamido-NAD(+)-binding site is contributed by Arg-140. Thr-160 is an ATP binding site. Glu-165 is a binding site for Mg(2+). Positions 173 and 180 each coordinate deamido-NAD(+). ATP-binding residues include Lys-189 and Thr-211. 260-261 contacts deamido-NAD(+); it reads HK.

This sequence belongs to the NAD synthetase family. In terms of assembly, homodimer.

The catalysed reaction is deamido-NAD(+) + NH4(+) + ATP = AMP + diphosphate + NAD(+) + H(+). The protein operates within cofactor biosynthesis; NAD(+) biosynthesis; NAD(+) from deamido-NAD(+) (ammonia route): step 1/1. In terms of biological role, catalyzes the ATP-dependent amidation of deamido-NAD to form NAD. Uses ammonia as a nitrogen source. In Escherichia coli O6:K15:H31 (strain 536 / UPEC), this protein is NH(3)-dependent NAD(+) synthetase.